The following is a 499-amino-acid chain: Probable cytosol aminopeptidase (499 aa).

Mn(2+)-binding residues include K267 and D272. K279 is an active-site residue. Residues D290, D349, and E351 each contribute to the Mn(2+) site. R353 is a catalytic residue.

It belongs to the peptidase M17 family. Requires Mn(2+) as cofactor.

The protein resides in the cytoplasm. It carries out the reaction Release of an N-terminal amino acid, Xaa-|-Yaa-, in which Xaa is preferably Leu, but may be other amino acids including Pro although not Arg or Lys, and Yaa may be Pro. Amino acid amides and methyl esters are also readily hydrolyzed, but rates on arylamides are exceedingly low.. The catalysed reaction is Release of an N-terminal amino acid, preferentially leucine, but not glutamic or aspartic acids.. Presumably involved in the processing and regular turnover of intracellular proteins. Catalyzes the removal of unsubstituted N-terminal amino acids from various peptides. In Alkaliphilus oremlandii (strain OhILAs) (Clostridium oremlandii (strain OhILAs)), this protein is Probable cytosol aminopeptidase.